The sequence spans 294 residues: 4-hydroxy-tetrahydrodipicolinate synthase (294 aa).

Pyruvate is bound at residue threonine 44. The active-site Proton donor/acceptor is the tyrosine 132. Lysine 160 (schiff-base intermediate with substrate) is an active-site residue. Isoleucine 205 provides a ligand contact to pyruvate.

The protein belongs to the DapA family. As to quaternary structure, homotetramer; dimer of dimers.

It localises to the cytoplasm. The catalysed reaction is L-aspartate 4-semialdehyde + pyruvate = (2S,4S)-4-hydroxy-2,3,4,5-tetrahydrodipicolinate + H2O + H(+). It participates in amino-acid biosynthesis; L-lysine biosynthesis via DAP pathway; (S)-tetrahydrodipicolinate from L-aspartate: step 3/4. In terms of biological role, catalyzes the condensation of (S)-aspartate-beta-semialdehyde [(S)-ASA] and pyruvate to 4-hydroxy-tetrahydrodipicolinate (HTPA). This chain is 4-hydroxy-tetrahydrodipicolinate synthase, found in Kosmotoga olearia (strain ATCC BAA-1733 / DSM 21960 / TBF 19.5.1).